Consider the following 269-residue polypeptide: Protein IAL1 (269 aa).

Positions 32 to 133 (SPCAACKFLR…QDLARAKYEL (102 aa)) constitute an LOB domain.

It belongs to the LOB domain-containing protein family. As to expression, expressed in leaves, leaf primordia, immature ears, immature tassels, whole ovules, silk and husk leaves.

It is found in the nucleus. The protein is Protein IAL1 of Zea mays (Maize).